Consider the following 378-residue polypeptide: Glutamate 5-kinase (378 aa).

An ATP-binding site is contributed by Lys14. Substrate contacts are provided by Ser54, Asp141, and Asn153. Ser173 to Asp174 provides a ligand contact to ATP. Residues Ala279–Asp356 enclose the PUA domain.

This sequence belongs to the glutamate 5-kinase family.

The protein localises to the cytoplasm. The enzyme catalyses L-glutamate + ATP = L-glutamyl 5-phosphate + ADP. The protein operates within amino-acid biosynthesis; L-proline biosynthesis; L-glutamate 5-semialdehyde from L-glutamate: step 1/2. In terms of biological role, catalyzes the transfer of a phosphate group to glutamate to form L-glutamate 5-phosphate. The sequence is that of Glutamate 5-kinase from Brucella abortus (strain S19).